We begin with the raw amino-acid sequence, 589 residues long: Guanylate-binding protein 1 (589 aa).

A GTPase domain (Globular) region spans residues 1–309 (MASEIHMSEP…SAICSGELPC (309 aa)). A GB1/RHD3-type G domain is found at 35–276 (TQPVVVVAIV…FTSYIFSYSG (242 aa)). GTP is bound by residues 47-53 (YRTGKSY), 67-69 (LGS), and 97-101 (DTEGL). The residue at position 156 (serine 156) is a Phosphoserine. At cysteine 586 the chain carries Cysteine methyl ester. A lipid anchor (S-farnesyl cysteine) is attached at cysteine 586. Residue cysteine 586 is the site of S-geranylgeranyl cysteine; partial attachment. Threonine 587 is modified (phosphothreonine). Positions 587 to 589 (TIL) are cleaved as a propeptide — removed in mature form.

The protein belongs to the TRAFAC class dynamin-like GTPase superfamily. GB1/RHD3 GTPase family. GB1 subfamily. Homodimer; homodimerization occurs upon GTP-binding and is required for the second hydrolysis step from GDP to GMP. Undergoes conformational changes and oligomerization upon GTP-binding and hydrolysis. Heterodimer with other family members, including GBP2, GBP3, GBP4 and GBP5. Dimerization regulates subcellular location to membranous structures. Interacts with SQSTM1. Interacts (when phosphorylated) with 14-3-3 protein sigma (SFN); leading to GBP1 retention in the cytosol and inactivation. Post-translationally, isoprenylation of mouse GBP1 is incomplete. It persistently exists in the cell as a mixture of C20-modified and (more predominantly) unmodified form. Isoprenylation is required for proper subcellular location. In terms of processing, phosphorylated at Ser-156 by PIM1 in absence of infection, inhibits GBP1: phosphorylation promotes interaction with 14-3-3 protein sigma (SFN), leading to GBP1 retention in the cytosol. Dephosphorylated in response to infection, liberating GBP1.

Its subcellular location is the cytoplasmic vesicle membrane. The protein localises to the golgi apparatus membrane. It is found in the cell membrane. It localises to the cytoplasm. The protein resides in the cytosol. Its subcellular location is the secreted. It carries out the reaction GTP + H2O = GDP + phosphate + H(+). The enzyme catalyses GDP + H2O = GMP + phosphate + H(+). In terms of biological role, interferon (IFN)-inducible GTPase that plays important roles in innate immunity against a diverse range of bacterial, viral and protozoan pathogens. Hydrolyzes GTP to GMP in two consecutive cleavage reactions: GTP is first hydrolyzed to GDP and then to GMP in a processive manner. Following infection, recruited to the pathogen-containing vacuoles or vacuole-escaped bacteria and promotes both inflammasome assembly and autophagy. Acts as a positive regulator of inflammasome assembly by facilitating the detection of inflammasome ligands from pathogens. Involved in the lysis of pathogen-containing vacuoles, releasing pathogens into the cytosol. Following pathogen release in the cytosol, forms a protein coat in a GTPase-dependent manner that encapsulates pathogens and promotes the detection of ligands by pattern recognition receptors. Plays a key role in inflammasome assembly in response to infection by Gram-negative bacteria: following pathogen release in the cytosol, forms a protein coat that encapsulates Gram-negative bacteria and directly binds to lipopolysaccharide (LPS), disrupting the O-antigen barrier and unmasking lipid A that is that detected by the non-canonical inflammasome effector CASP4/CASP11. Also promotes recruitment of proteins that mediate bacterial cytolysis, leading to release double-stranded DNA (dsDNA) that activates the AIM2 inflammasome. Involved in autophagy by regulating bacteriolytic peptide generation via its interaction with ubiquitin-binding protein SQSTM1, which delivers monoubiquitinated proteins to autolysosomes for the generation of bacteriolytic peptides. Confers protection to several pathogens, including the bacterial pathogens L.monocytogenes and M.bovis BCG as well as the protozoan pathogen T.gondii. Exhibits antiviral activity against influenza virus. This chain is Guanylate-binding protein 1 (Gbp1), found in Mus musculus (Mouse).